Here is a 595-residue protein sequence, read N- to C-terminus: Aspartate--tRNA(Asp/Asn) ligase (595 aa).

An L-aspartate-binding site is contributed by E177. The interval 201–204 (QQFK) is aspartate. Residue R223 coordinates L-aspartate. ATP-binding positions include 223–225 (RDE) and Q232. H455 is an L-aspartate binding site. Residue E489 participates in ATP binding. Position 496 (R496) interacts with L-aspartate. ATP is bound at residue 542-545 (GLDR).

It belongs to the class-II aminoacyl-tRNA synthetase family. Type 1 subfamily. In terms of assembly, homodimer.

The protein resides in the cytoplasm. The catalysed reaction is tRNA(Asx) + L-aspartate + ATP = L-aspartyl-tRNA(Asx) + AMP + diphosphate. In terms of biological role, aspartyl-tRNA synthetase with relaxed tRNA specificity since it is able to aspartylate not only its cognate tRNA(Asp) but also tRNA(Asn). Reaction proceeds in two steps: L-aspartate is first activated by ATP to form Asp-AMP and then transferred to the acceptor end of tRNA(Asp/Asn). This Opitutus terrae (strain DSM 11246 / JCM 15787 / PB90-1) protein is Aspartate--tRNA(Asp/Asn) ligase.